The chain runs to 153 residues: Ribosomal RNA large subunit methyltransferase H (153 aa).

S-adenosyl-L-methionine-binding positions include leucine 70, glycine 102, and 121–126 (LSRMTF).

This sequence belongs to the RNA methyltransferase RlmH family. Homodimer.

The protein localises to the cytoplasm. It carries out the reaction pseudouridine(1915) in 23S rRNA + S-adenosyl-L-methionine = N(3)-methylpseudouridine(1915) in 23S rRNA + S-adenosyl-L-homocysteine + H(+). Specifically methylates the pseudouridine at position 1915 (m3Psi1915) in 23S rRNA. This Geotalea uraniireducens (strain Rf4) (Geobacter uraniireducens) protein is Ribosomal RNA large subunit methyltransferase H.